Here is a 155-residue protein sequence, read N- to C-terminus: NADH-ubiquinone oxidoreductase chain 6 (155 aa).

The next 4 helical transmembrane spans lie at 10–30 (ILAIGLLSPVQSIVCLIVLFV), 43–63 (LMGILYVLIYVGAIAILFLFI), 75–95 (GTIHPLIFTILIICLIPLDLS), and 133–153 (AIPMILIGLILILSVIGAIAI).

Belongs to the complex I subunit 6 family.

Its subcellular location is the mitochondrion membrane. It catalyses the reaction a ubiquinone + NADH + 5 H(+)(in) = a ubiquinol + NAD(+) + 4 H(+)(out). Functionally, core subunit of the mitochondrial membrane respiratory chain NADH dehydrogenase (Complex I) that is believed to belong to the minimal assembly required for catalysis. Complex I functions in the transfer of electrons from NADH to the respiratory chain. The immediate electron acceptor for the enzyme is believed to be ubiquinone. The chain is NADH-ubiquinone oxidoreductase chain 6 (ND6) from Candida parapsilosis (Yeast).